We begin with the raw amino-acid sequence, 159 residues long: Large ribosomal subunit protein uL15 (159 aa).

The segment at 1 to 46 (MKLNELSPSVPKKNRKRIGRGNSSGWGKTAGKGSNGQNSRAGGGVK) is disordered. Residues 22-34 (NSSGWGKTAGKGS) are compositionally biased toward gly residues.

The protein belongs to the universal ribosomal protein uL15 family. Part of the 50S ribosomal subunit.

In terms of biological role, binds to the 23S rRNA. This is Large ribosomal subunit protein uL15 from Fusobacterium nucleatum subsp. nucleatum (strain ATCC 25586 / DSM 15643 / BCRC 10681 / CIP 101130 / JCM 8532 / KCTC 2640 / LMG 13131 / VPI 4355).